A 306-amino-acid chain; its full sequence is Follistatin-related protein 1 (306 aa).

An N-terminal signal peptide occupies residues 1–18; it reads MWKRWLALALVAVAWVRA. One can recognise a Follistatin-like domain in the interval 28–51; sequence ICANVFCGAGRECAVTEKGEPTCL. Cystine bridges form between cysteine 29/cysteine 40, cysteine 34/cysteine 50, cysteine 52/cysteine 82, cysteine 56/cysteine 75, and cysteine 64/cysteine 96. Residues 46 to 98 form the Kazal-like domain; sequence GEPTCLCIEQCKPHKRPVCGSNGKTYLNHCELHRDACLTGSKIQVDYDGHCKE. Asparagine 142 is a glycosylation site (N-linked (GlcNAc...) asparagine). Residues 142–176 enclose the EF-hand 1 domain; that stretch reads NYSEILDKYFKNFDNGDSRLDSSEFLKFVEQNETA. Serine 163 bears the Phosphoserine mark. Asparagine 173 and asparagine 178 each carry an N-linked (GlcNAc...) asparagine glycan. Residues 191–226 form the EF-hand 2 domain; it reads LRGLCVDALIELSDENADWKLSFQEFLKCLNPSFNP. A VWFC domain is found at 231-285; it reads CALEDETYADGAETEVDCNRCVCACGNWVCTAMTCDGKNQKGAQTQTEEEMTRYV.

In terms of assembly, homodimer. Interacts with SCN10A. Interacts with DIP2A; DIP2A may act as a cell surface receptor for FSTL1. Interacts with BMP4. Interacts with CD14; this interaction promotes TL4-mediated signaling cascade.

The protein resides in the secreted. Functionally, secreted glycoprotein that is involved in various physiological processes, such as angiogenesis, regulation of the immune response, cell proliferation and differentiation. Plays a role in the development of the central nervous system, skeletal system, lungs, and ureter. Promotes endothelial cell survival, migration and differentiation into network structures in an AKT-dependent manner. Also promotes survival of cardiac myocytes. Initiates various signaling cascades by activating different receptors on the cell surface such as DIP2A, TLR4 or BMP receptors. This Pongo abelii (Sumatran orangutan) protein is Follistatin-related protein 1 (FSTL1).